Consider the following 306-residue polypeptide: Ribonuclease Z (306 aa).

Residues histidine 63, histidine 65, aspartate 67, histidine 68, histidine 141, aspartate 211, and histidine 269 each coordinate Zn(2+). Catalysis depends on aspartate 67, which acts as the Proton acceptor.

Belongs to the RNase Z family. As to quaternary structure, homodimer. Requires Zn(2+) as cofactor.

The enzyme catalyses Endonucleolytic cleavage of RNA, removing extra 3' nucleotides from tRNA precursor, generating 3' termini of tRNAs. A 3'-hydroxy group is left at the tRNA terminus and a 5'-phosphoryl group is left at the trailer molecule.. Functionally, zinc phosphodiesterase, which displays some tRNA 3'-processing endonuclease activity. Probably involved in tRNA maturation, by removing a 3'-trailer from precursor tRNA. In Staphylococcus haemolyticus (strain JCSC1435), this protein is Ribonuclease Z.